Reading from the N-terminus, the 510-residue chain is NAD(P)H-quinone oxidoreductase subunit 2, chloroplastic (510 aa).

12 helical membrane passes run 24–44 (LLLFHGSFIFPECILIFGLIL), 59–79 (WFYFISSTSLVMSITALFFRW), 99–119 (IFQFLILLCSTLCIPLSVEYI), 124–144 (MAITEFLLFVLTATLGGMFLC), 149–169 (LITIFVAPECFSLCSYLLSGY), 184–204 (LLMGGASSSILVHGLSWLYGL), 229–249 (ISIALISITVGIGFKLSPAPF), 295–315 (WHLLLEILAILSMILGNLIAL), 323–343 (MLAYSSIGQIGYVIIGIIVGD), 354–374 (YMLFYISMNLGTFACIVSFGL), 395–415 (ALSSALCLLSLGGLPPLAGFF), and 418–438 (LYLFWCGWQAGLYFLVSIGLL).

The protein belongs to the complex I subunit 2 family. In terms of assembly, NDH is composed of at least 16 different subunits, 5 of which are encoded in the nucleus.

Its subcellular location is the plastid. It localises to the chloroplast thylakoid membrane. It carries out the reaction a plastoquinone + NADH + (n+1) H(+)(in) = a plastoquinol + NAD(+) + n H(+)(out). The enzyme catalyses a plastoquinone + NADPH + (n+1) H(+)(in) = a plastoquinol + NADP(+) + n H(+)(out). Its function is as follows. NDH shuttles electrons from NAD(P)H:plastoquinone, via FMN and iron-sulfur (Fe-S) centers, to quinones in the photosynthetic chain and possibly in a chloroplast respiratory chain. The immediate electron acceptor for the enzyme in this species is believed to be plastoquinone. Couples the redox reaction to proton translocation, and thus conserves the redox energy in a proton gradient. The sequence is that of NAD(P)H-quinone oxidoreductase subunit 2, chloroplastic from Coelogyne cristata (Orchid).